The chain runs to 73 residues: Conotoxin Cl9.2 (73 aa).

Residues 1 to 18 form the signal peptide; that stretch reads MSKLVILAVLVLLPLVTA. A propeptide spanning residues 19–41 is cleaved from the precursor; it reads EHGRDEQAMQPEKKTMWTLWSLT. 3 cysteine pairs are disulfide-bonded: C46/C61, C52/C63, and C58/C72.

Expressed by the venom duct.

It localises to the secreted. This chain is Conotoxin Cl9.2, found in Californiconus californicus (California cone).